The primary structure comprises 356 residues: Mannonate dehydratase 2 (356 aa).

It belongs to the mannonate dehydratase family. Requires Fe(2+) as cofactor. Mn(2+) is required as a cofactor.

It carries out the reaction D-mannonate = 2-dehydro-3-deoxy-D-gluconate + H2O. It functions in the pathway carbohydrate metabolism; pentose and glucuronate interconversion. Its function is as follows. Catalyzes the dehydration of D-mannonate. In Bacillus licheniformis (strain ATCC 14580 / DSM 13 / JCM 2505 / CCUG 7422 / NBRC 12200 / NCIMB 9375 / NCTC 10341 / NRRL NRS-1264 / Gibson 46), this protein is Mannonate dehydratase 2.